A 179-amino-acid polypeptide reads, in one-letter code: Coatomer subunit zeta-2 (179 aa).

The protein belongs to the adaptor complexes small subunit family. In terms of assembly, oligomeric complex that consists of at least the alpha, beta, beta', gamma, delta, epsilon and zeta subunits.

Its subcellular location is the cytoplasm. The protein resides in the golgi apparatus membrane. It localises to the cytoplasmic vesicle. It is found in the COPI-coated vesicle membrane. In terms of biological role, the coatomer is a cytosolic protein complex that binds to dilysine motifs and reversibly associates with Golgi non-clathrin-coated vesicles, which further mediate biosynthetic protein transport from the ER, via the Golgi up to the trans Golgi network. Coatomer complex is required for budding from Golgi membranes, and is essential for the retrograde Golgi-to-ER transport of dilysine-tagged proteins. The zeta subunit may be involved in regulating the coat assembly and, hence, the rate of biosynthetic protein transport due to its association-dissociation properties with the coatomer complex. This is Coatomer subunit zeta-2 from Arabidopsis thaliana (Mouse-ear cress).